We begin with the raw amino-acid sequence, 332 residues long: MARILDNNVMGNEEFSDRTLRPQYLHEYIGQDKVKEQFAIFIEAAKRRDESLDHVLLFGPPGLGKTTMAFVIANELGVNLKQTSGPAVEKAGDLVAILNELEPGDILFIDEIHRMPMSVEEVLYSAMEDFYIDIMIGAGDTSRSIHLDLPPFTLIGATTRAGMLSNPLRARFGITGHMEYYQEKDLTEIVERTATIFEIKIDHEAARKLACRSRGTPRIANRLLKRVRDYAQIIGDGIITAQITDRALTMLDVDREGLNYIDQKILRTMIEMYQGGPVGLGTLSVNIAEERNTVEEMYEPYLIQKGFLMRTRTGRVATQKAYRHLGYPYQNT.

Residues 1 to 181 (MARILDNNVM…FGITGHMEYY (181 aa)) form a large ATPase domain (RuvB-L) region. Residues leucine 20, arginine 21, glycine 62, lysine 65, threonine 66, threonine 67, 128–130 (EDF), arginine 171, tyrosine 181, and arginine 218 contribute to the ATP site. Threonine 66 provides a ligand contact to Mg(2+). Residues 182–252 (QEKDLTEIVE…ITDRALTMLD (71 aa)) are small ATPAse domain (RuvB-S). A head domain (RuvB-H) region spans residues 255 to 332 (REGLNYIDQK…RHLGYPYQNT (78 aa)). Arginine 291, arginine 310, arginine 312, and arginine 315 together coordinate DNA.

The protein belongs to the RuvB family. As to quaternary structure, homohexamer. Forms an RuvA(8)-RuvB(12)-Holliday junction (HJ) complex. HJ DNA is sandwiched between 2 RuvA tetramers; dsDNA enters through RuvA and exits via RuvB. An RuvB hexamer assembles on each DNA strand where it exits the tetramer. Each RuvB hexamer is contacted by two RuvA subunits (via domain III) on 2 adjacent RuvB subunits; this complex drives branch migration. In the full resolvosome a probable DNA-RuvA(4)-RuvB(12)-RuvC(2) complex forms which resolves the HJ.

The protein localises to the cytoplasm. It catalyses the reaction ATP + H2O = ADP + phosphate + H(+). Functionally, the RuvA-RuvB-RuvC complex processes Holliday junction (HJ) DNA during genetic recombination and DNA repair, while the RuvA-RuvB complex plays an important role in the rescue of blocked DNA replication forks via replication fork reversal (RFR). RuvA specifically binds to HJ cruciform DNA, conferring on it an open structure. The RuvB hexamer acts as an ATP-dependent pump, pulling dsDNA into and through the RuvAB complex. RuvB forms 2 homohexamers on either side of HJ DNA bound by 1 or 2 RuvA tetramers; 4 subunits per hexamer contact DNA at a time. Coordinated motions by a converter formed by DNA-disengaged RuvB subunits stimulates ATP hydrolysis and nucleotide exchange. Immobilization of the converter enables RuvB to convert the ATP-contained energy into a lever motion, pulling 2 nucleotides of DNA out of the RuvA tetramer per ATP hydrolyzed, thus driving DNA branch migration. The RuvB motors rotate together with the DNA substrate, which together with the progressing nucleotide cycle form the mechanistic basis for DNA recombination by continuous HJ branch migration. Branch migration allows RuvC to scan DNA until it finds its consensus sequence, where it cleaves and resolves cruciform DNA. The chain is Holliday junction branch migration complex subunit RuvB from Streptococcus pyogenes serotype M18 (strain MGAS8232).